Reading from the N-terminus, the 455-residue chain is Ribulose bisphosphate carboxylase large chain (455 aa).

The residue at position 5 (Lys-5) is an N6,N6,N6-trimethyllysine. Residues Asn-114 and Thr-164 each coordinate substrate. Lys-166 acts as the Proton acceptor in catalysis. Residue Lys-168 coordinates substrate. Residues Lys-192, Asp-194, and Glu-195 each coordinate Mg(2+). Residue Lys-192 is modified to N6-carboxylysine. The active-site Proton acceptor is His-285. Positions 286, 318, and 370 each coordinate substrate.

It belongs to the RuBisCO large chain family. Type I subfamily. In terms of assembly, heterohexadecamer of 8 large chains and 8 small chains; disulfide-linked. The disulfide link is formed within the large subunit homodimers. The cofactor is Mg(2+). Post-translationally, the disulfide bond which can form in the large chain dimeric partners within the hexadecamer appears to be associated with oxidative stress and protein turnover.

It is found in the plastid. The protein resides in the chloroplast. The catalysed reaction is 2 (2R)-3-phosphoglycerate + 2 H(+) = D-ribulose 1,5-bisphosphate + CO2 + H2O. It carries out the reaction D-ribulose 1,5-bisphosphate + O2 = 2-phosphoglycolate + (2R)-3-phosphoglycerate + 2 H(+). In terms of biological role, ruBisCO catalyzes two reactions: the carboxylation of D-ribulose 1,5-bisphosphate, the primary event in carbon dioxide fixation, as well as the oxidative fragmentation of the pentose substrate in the photorespiration process. Both reactions occur simultaneously and in competition at the same active site. This chain is Ribulose bisphosphate carboxylase large chain, found in Senna didymobotrya (Popcorn cassia).